A 158-amino-acid chain; its full sequence is uncharacterized protein (158 aa).

This is an uncharacterized protein from Saccharomyces cerevisiae (strain ATCC 204508 / S288c) (Baker's yeast).